A 248-amino-acid polypeptide reads, in one-letter code: NH(3)-dependent NAD(+) synthetase (248 aa).

ATP is bound at residue 31–38 (GVSGGVDS). Residue Asp37 participates in Mg(2+) binding. Arg114 lines the deamido-NAD(+) pocket. Thr134 is a binding site for ATP. Glu139 is a binding site for Mg(2+). Positions 147 and 154 each coordinate deamido-NAD(+). Positions 163 and 185 each coordinate ATP. 236-237 (HK) serves as a coordination point for deamido-NAD(+).

Belongs to the NAD synthetase family. Homodimer.

It catalyses the reaction deamido-NAD(+) + NH4(+) + ATP = AMP + diphosphate + NAD(+) + H(+). Its pathway is cofactor biosynthesis; NAD(+) biosynthesis; NAD(+) from deamido-NAD(+) (ammonia route): step 1/1. Functionally, catalyzes the ATP-dependent amidation of deamido-NAD to form NAD. Uses ammonia as a nitrogen source. This Methanoregula boonei (strain DSM 21154 / JCM 14090 / 6A8) protein is NH(3)-dependent NAD(+) synthetase.